We begin with the raw amino-acid sequence, 429 residues long: 4-hydroxyphenylacetate degradation bifunctional isomerase/decarboxylase (429 aa).

Approximate repeat units follow at residues 1–215 (MKGT…RKSF) and 216–429 (PTLP…ETAK). A divalent metal cation contacts are provided by E276, E278, and D307.

Belongs to the FAH family. Monomer. It depends on Mg(2+) as a cofactor.

It carries out the reaction (2E,4Z)-5-hydroxypenta-2,4-diene-1,2,5-tricarboxylate = (3E,5R)-5-carboxy-2-oxohept-3-enedioate. The enzyme catalyses (3E,5R)-5-carboxy-2-oxohept-3-enedioate + H(+) = (4Z)-2-oxohept-4-enedioate + CO2. Its pathway is aromatic compound metabolism; 4-hydroxyphenylacetate degradation; pyruvate and succinate semialdehyde from 4-hydroxyphenylacetate: step 4/7. It functions in the pathway aromatic compound metabolism; 4-hydroxyphenylacetate degradation; pyruvate and succinate semialdehyde from 4-hydroxyphenylacetate: step 5/7. Functionally, decarboxylates OPET (5-oxo-pent-3-ene-1,2,5-tricarboxylic acid) into HHDD (2-hydroxy-hept-2,4-diene-1,7-dioate) and isomerizes it to OHED (2-oxo-hept-3-ene-1,7-dioate). This chain is 4-hydroxyphenylacetate degradation bifunctional isomerase/decarboxylase (hpaG), found in Escherichia coli.